Consider the following 213-residue polypeptide: Uridine kinase (213 aa).

14-21 is an ATP binding site; that stretch reads GASASGKS.

It belongs to the uridine kinase family.

It localises to the cytoplasm. The catalysed reaction is uridine + ATP = UMP + ADP + H(+). It carries out the reaction cytidine + ATP = CMP + ADP + H(+). It participates in pyrimidine metabolism; CTP biosynthesis via salvage pathway; CTP from cytidine: step 1/3. The protein operates within pyrimidine metabolism; UMP biosynthesis via salvage pathway; UMP from uridine: step 1/1. This Vibrio campbellii (strain ATCC BAA-1116) protein is Uridine kinase.